Reading from the N-terminus, the 353-residue chain is Uroporphyrinogen decarboxylase (353 aa).

Residues 27-31 (RQAGR), F46, D76, Y152, S207, and H321 contribute to the substrate site.

Belongs to the uroporphyrinogen decarboxylase family. In terms of assembly, homodimer.

The protein resides in the cytoplasm. The catalysed reaction is uroporphyrinogen III + 4 H(+) = coproporphyrinogen III + 4 CO2. It functions in the pathway porphyrin-containing compound metabolism; protoporphyrin-IX biosynthesis; coproporphyrinogen-III from 5-aminolevulinate: step 4/4. Its function is as follows. Catalyzes the decarboxylation of four acetate groups of uroporphyrinogen-III to yield coproporphyrinogen-III. The protein is Uroporphyrinogen decarboxylase of Listeria monocytogenes serotype 4b (strain F2365).